A 119-amino-acid polypeptide reads, in one-letter code: Protein phosphatase EYA3 (119 aa).

It belongs to the HAD-like hydrolase superfamily. EYA family. Requires Mg(2+) as cofactor.

It is found in the cytoplasm. The protein resides in the nucleus. The catalysed reaction is O-phospho-L-tyrosyl-[protein] + H2O = L-tyrosyl-[protein] + phosphate. In terms of biological role, tyrosine phosphatase that specifically dephosphorylates 'Tyr-142' of histone H2AX (H2AXY142ph). 'Tyr-142' phosphorylation of histone H2AX plays a central role in DNA repair and acts as a mark that distinguishes between apoptotic and repair responses to genotoxic stress. Promotes efficient DNA repair by dephosphorylating H2AX, promoting the recruitment of DNA repair complexes containing MDC1. Its function as histone phosphatase probably explains its role in transcription regulation during organogenesis. May be involved in development of the eye. In Gallus gallus (Chicken), this protein is Protein phosphatase EYA3 (EYA3).